We begin with the raw amino-acid sequence, 205 residues long: Thymidylate kinase (205 aa).

11 to 18 (GVEGSGKS) lines the ATP pocket.

Belongs to the thymidylate kinase family.

It carries out the reaction dTMP + ATP = dTDP + ADP. Its function is as follows. Phosphorylation of dTMP to form dTDP in both de novo and salvage pathways of dTTP synthesis. The sequence is that of Thymidylate kinase from Ruthia magnifica subsp. Calyptogena magnifica.